A 507-amino-acid polypeptide reads, in one-letter code: Inactive alanine aminotransferase (507 aa).

Residues Ala173, Ser174, Tyr199, Asn255, and Ser324 each contribute to the pyridoxal 5'-phosphate site. Residue Lys327 is modified to N6-(pyridoxal phosphate)lysine. Arg336 lines the pyridoxal 5'-phosphate pocket.

The protein belongs to the class-I pyridoxal-phosphate-dependent aminotransferase family. Alanine aminotransferase subfamily. As to quaternary structure, homodimer. Requires pyridoxal 5'-phosphate as cofactor.

The protein localises to the cytoplasm. Its subcellular location is the nucleus. Functionally, inactive alanine aminotransferase. Forms a catalytically active Schiff base with PLP, but lacks alanine transaminase activity, probably due to an altered structural conformation of the dimeric enzyme. This suggests this protein may have a yet undiscovered physiological function. The polypeptide is Inactive alanine aminotransferase (ALT2) (Saccharomyces cerevisiae (strain ATCC 204508 / S288c) (Baker's yeast)).